The following is a 1534-amino-acid chain: Ribosome-binding protein 1 (1534 aa).

Over 1-7 (MDIYDTQ) the chain is Lumenal. A helical transmembrane segment spans residues 8–28 (TLGVMVFGGFMVVSAIGIFLV). The Cytoplasmic portion of the chain corresponds to 29 to 1534 (STFSMKETSY…DSSSKEGTSV (1506 aa)). Disordered regions lie at residues 45-91 (QRKE…PAPN) and 125-152 (PAMP…VEPA). Positions 52–63 (THHQKVEKKKKE) are enriched in basic residues. Residues 64 to 88 (KTVEKKGKTKKKEEKPNGKIPDHEP) are compositionally biased toward basic and acidic residues. A compositionally biased stretch (low complexity) spans 125 to 135 (PAMPQEKLAPS). A Glycyl lysine isopeptide (Lys-Gly) (interchain with G-Cter in SUMO2) cross-link involves residue K148. Residues S159 and S165 each carry the phosphoserine modification. 3 disordered regions span residues 173-780 (APKE…PLYL), 968-987 (KELV…RKAL), and 1021-1082 (RELC…RAEN). Residues 175–194 (KEVPMVVVPPVGAKAGTPAT) are compositionally biased toward low complexity. 54 tandem repeats follow at residues 197–206 (AQGKKAEGAQ), 207–216 (NQSRKAEGAP), 217–226 (NQGKKAEGAL), 227–236 (NQGKKAEGAQ), 237–246 (NQGKKVEVAP), 247–256 (NQGKKAEGGQ), 257–266 (NQGKKVEGAQ), 267–276 (NQGKKAEGTP), 277–286 (NQGKKAEGAP), 287–296 (NQGKKTDGAP), 297–306 (NQGKKSEGAP), 307–316 (NQGKKAEGAQ), 317–326 (NQGKKVEVAP), 327–336 (NQGKKAEGGQ), 337–346 (NQGKKVEGAQ), 347–356 (NQGKKAEGTP), 357–366 (NQGKKAEGAP), 367–376 (NQGKKTDGAP), 377–386 (NQGKKSEGAP), 387–396 (NQGKKVEGAQ), 397–406 (NQGKKVEGVQ), 407–416 (NQGKKAEGAQ), 417–426 (NQGKKAEGTS), 427–436 (SQGRKEEGTP), 437–446 (NLGKKAEGSP), 447–456 (NQGKKVEVVQ), 457–466 (NQSKKVEGAP), 467–476 (NQGKKAEGSQ), 477–486 (NQGKKTEGAS), 487–496 (NQGKKVDGAQ), 497–506 (NQGKKAEGAP), 507–516 (NQGKKVEGAQ), 517–526 (NQGKKAEGTP), 527–536 (NQGKKAEGAQ), 537–546 (NQGKKAEGAP), 547–556 (NQGKKAEGAP), 557–566 (NQGKKAEGAP), 567–576 (NQGKKAEGAP), 577–586 (NQGKKAEAAP), 587–596 (NQGKKAEGAP), 597–606 (NQGKKAEGAP), 607–616 (NQGKKAEAAP), 617–626 (NQGKKAEGAP), 627–636 (NQGKKAEGAP), 637–646 (NQGKKAEGAP), 647–656 (NQGKKAEGAQ), 657–666 (NQGKKAEGAP), 667–676 (NQGKKADLVA), 677–686 (NQGTKAEGVA), 687–696 (GQGKKAEGAP), 697–706 (NQGKKGEGTP), 707–716 (NQGKKSEGSP), 717–726 (NQGKKVDASA), and 727–736 (NQSKRAESAP). A 54 X 10 AA tandem repeats of [NASG]-[QL]-[GS]-[KRT]-[KR]-[AVTSEG]-[ED]-[AGVLS]-[ATGSV]-[PQLSA] region spans residues 197 to 736 (AQGKKAEGAQ…NQSKRAESAP (540 aa)). T275 is modified (phosphothreonine). The segment covering 395 to 428 (AQNQGKKVEGVQNQGKKAEGAQNQGKKAEGTSSQ) has biased composition (polar residues). Residues 474–499 (GSQNQGKKTEGASNQGKKVDGAQNQG) show a composition bias toward polar residues. Residues 705-718 (TPNQGKKSEGSPNQ) are compositionally biased toward polar residues. S715 is modified (phosphoserine). S747 is modified (phosphoserine). A Glycyl lysine isopeptide (Lys-Gly) (interchain with G-Cter in SUMO1) cross-link involves residue K752. Residue S1032 is modified to Phosphoserine. Positions 1059–1080 (AEVKSKSEELSGLHGQLKEARA) are enriched in basic and acidic residues. K1064 bears the N6-acetyllysine mark. Phosphoserine occurs at positions 1091 and 1110. Disordered regions lie at residues 1224 to 1251 (ELLK…ETQN), 1391 to 1416 (KSHV…VELK), and 1509 to 1534 (ERDT…GTSV). The span at 1509–1528 (ERDTVKKLQEQLDKTDDSSS) shows a compositional bias: basic and acidic residues.

The protein resides in the endoplasmic reticulum membrane. In terms of biological role, acts as a ribosome receptor and mediates interaction between the ribosome and the endoplasmic reticulum membrane. In Canis lupus familiaris (Dog), this protein is Ribosome-binding protein 1 (RRBP1).